Here is a 152-residue protein sequence, read N- to C-terminus: Small ribosomal subunit protein uS15 (152 aa).

Residues 1-16 (MARIHARRRGKSGSKR) show a composition bias toward basic residues. Residues 1 to 21 (MARIHARRRGKSGSKRIYRDS) form a disordered region.

This sequence belongs to the universal ribosomal protein uS15 family. In terms of assembly, part of the 30S ribosomal subunit.

The chain is Small ribosomal subunit protein uS15 from Archaeoglobus fulgidus (strain ATCC 49558 / DSM 4304 / JCM 9628 / NBRC 100126 / VC-16).